Reading from the N-terminus, the 346-residue chain is Lysyl aminopeptidase (346 aa).

Zn(2+) is bound by residues His-63 and Asp-177. Residue Glu-207 is the Proton acceptor of the active site. Glu-208, Asp-230, and His-314 together coordinate Zn(2+).

In terms of assembly, homotetramer. Zn(2+) serves as cofactor.

The catalysed reaction is Preferentially, release of N-terminal lysine.. In terms of biological role, hydrolyzes di-, tri- and tetrapeptides with a lysine as the N-terminal amino acid and with Gly, Lys, Ala, Phe or Glu in the second position. The chain is Lysyl aminopeptidase from Pyrococcus furiosus (strain ATCC 43587 / DSM 3638 / JCM 8422 / Vc1).